The primary structure comprises 38 residues: Photosystem II reaction center protein L (38 aa).

A helical membrane pass occupies residues 17 to 37; sequence SLYWGLLLMFVLAVLFSSYFF.

It belongs to the PsbL family. PSII is composed of 1 copy each of membrane proteins PsbA, PsbB, PsbC, PsbD, PsbE, PsbF, PsbH, PsbI, PsbJ, PsbK, PsbL, PsbM, PsbT, PsbX, PsbY, PsbZ, Psb30/Ycf12, at least 3 peripheral proteins of the oxygen-evolving complex and a large number of cofactors. It forms dimeric complexes.

The protein localises to the plastid. It localises to the chloroplast thylakoid membrane. In terms of biological role, one of the components of the core complex of photosystem II (PSII). PSII is a light-driven water:plastoquinone oxidoreductase that uses light energy to abstract electrons from H(2)O, generating O(2) and a proton gradient subsequently used for ATP formation. It consists of a core antenna complex that captures photons, and an electron transfer chain that converts photonic excitation into a charge separation. This subunit is found at the monomer-monomer interface and is required for correct PSII assembly and/or dimerization. The protein is Photosystem II reaction center protein L of Emiliania huxleyi (Coccolithophore).